A 156-amino-acid polypeptide reads, in one-letter code: MSRRGNVKKRPVPPDPVYNSTLLSMTIRRVMRSGKKSLASSIVYNALASVGEKTGEDPLEVFEKAIKNLTPLVEVKARRVGGATYQVPMEVRPARGTALALRWLVHFSRARGGRTMESKLANEIMDAANETGAAIKKREETHRMAEANKAFAHYRY.

Belongs to the universal ribosomal protein uS7 family. In terms of assembly, part of the 30S ribosomal subunit. Contacts proteins S9 and S11.

In terms of biological role, one of the primary rRNA binding proteins, it binds directly to 16S rRNA where it nucleates assembly of the head domain of the 30S subunit. Is located at the subunit interface close to the decoding center, probably blocks exit of the E-site tRNA. The sequence is that of Small ribosomal subunit protein uS7 from Synechocystis sp. (strain ATCC 27184 / PCC 6803 / Kazusa).